The sequence spans 308 residues: MITILGAGKVGMATAVMLMMRGYDDLLLIARTPGKPQGEALDLAHAAAELGVDIRISGSNSYEDMRGSDIVLVTAGIGRKPGMTREQLLEANANTMADLAEKIKAYAKDAIVVITTNPVDAMTYVMYKKTGFPRERVIGFSGILDSARMAYYISQKLGVSFKSVNAIVLGMHGQKMFPVPRLSSVGGVPLEHLMSKEEIEEVVSETVNAGAKITELRGYSSNYGPAAGLVLTVEAIKRDSKRIYPYSLYLQGEYGYNDIVAEVPAVIGKSGIERIIELPLTEDEKRKFDEAVQAVKKLVETLPPQLRE.

6-11 (GAGKVG) lines the NADP(+) pocket. Substrate is bound by residues Arg79 and Arg85. Residues Asn92 and 115–117 (TTN) each bind NADP(+). Residues Asn117 and Arg148 each contribute to the substrate site. Catalysis depends on His172, which acts as the Proton acceptor.

This sequence belongs to the LDH/MDH superfamily. As to quaternary structure, homotetramer.

It catalyses the reaction (S)-malate + NADP(+) = oxaloacetate + NADPH + H(+). The enzyme catalyses (S)-malate + NAD(+) = oxaloacetate + NADH + H(+). Catalyzes the reversible oxidation of malate to oxaloacetate. Can also oxidize tartrate. Can utilize both NAD and NADP. Catalytic efficiency for malate oxidation is 3-fold higher with NADP. The protein is Malate dehydrogenase (mdh) of Aeropyrum pernix (strain ATCC 700893 / DSM 11879 / JCM 9820 / NBRC 100138 / K1).